The following is a 359-amino-acid chain: Fructose-bisphosphate aldolase, cytoplasmic isozyme 2 (359 aa).

2 residues coordinate substrate: arginine 52 and lysine 143. Residue glutamate 184 is the Proton acceptor of the active site. The Schiff-base intermediate with dihydroxyacetone-P role is filled by lysine 226.

The protein belongs to the class I fructose-bisphosphate aldolase family.

Its subcellular location is the cytoplasm. It catalyses the reaction beta-D-fructose 1,6-bisphosphate = D-glyceraldehyde 3-phosphate + dihydroxyacetone phosphate. Its pathway is carbohydrate degradation; glycolysis; D-glyceraldehyde 3-phosphate and glycerone phosphate from D-glucose: step 4/4. This Pisum sativum (Garden pea) protein is Fructose-bisphosphate aldolase, cytoplasmic isozyme 2.